The chain runs to 378 residues: Chaperone protein DnaJ (378 aa).

One can recognise a J domain in the interval 5–70; it reads DFYEVLGLSK…QKRAAYDQYG (66 aa). A CR-type zinc finger spans residues 133–211; it reads GITKEIRIPT…CHGDGRVERY (79 aa). Residues Cys146, Cys149, Cys163, Cys166, Cys185, Cys188, Cys199, and Cys202 each coordinate Zn(2+). CXXCXGXG motif repeat units lie at residues 146 to 153, 163 to 170, 185 to 192, and 199 to 206; these read CDKCHGSG, CSTCHGAG, CPTCHGRG, and CSKCHGDG.

It belongs to the DnaJ family. Homodimer. Zn(2+) is required as a cofactor.

The protein resides in the cytoplasm. Its function is as follows. Participates actively in the response to hyperosmotic and heat shock by preventing the aggregation of stress-denatured proteins and by disaggregating proteins, also in an autonomous, DnaK-independent fashion. Unfolded proteins bind initially to DnaJ; upon interaction with the DnaJ-bound protein, DnaK hydrolyzes its bound ATP, resulting in the formation of a stable complex. GrpE releases ADP from DnaK; ATP binding to DnaK triggers the release of the substrate protein, thus completing the reaction cycle. Several rounds of ATP-dependent interactions between DnaJ, DnaK and GrpE are required for fully efficient folding. Also involved, together with DnaK and GrpE, in the DNA replication of plasmids through activation of initiation proteins. In Proteus mirabilis (strain HI4320), this protein is Chaperone protein DnaJ.